The sequence spans 193 residues: MTDYLLLLVGTVLVNNFVLVQFLGLCPFMGVSSRTETAIGMSFATVFVMTLASLLSYLVTTYLLVPLNLEYLTTMSFILVIAVVVQFTEMVVHKTSASLYRLLGIFLPLITTNCAVLGVALLNLRLQHGFFESIIYGFGAALGFSLVLIMFSAMREKLANADVPAPFKGTAIAMITAGLMSLAFLGFTGLVKI.

Helical transmembrane passes span 5 to 25 (LLLL…FLGL), 39 to 59 (IGMS…SYLV), 72 to 92 (LTTM…EMVV), 102 to 122 (LLGI…VALL), 134 to 154 (IIYG…FSAM), and 171 to 191 (AIAM…TGLV).

Belongs to the NqrDE/RnfAE family. The complex is composed of six subunits: RnfA, RnfB, RnfC, RnfD, RnfE and RnfG.

The protein resides in the cell inner membrane. Part of a membrane-bound complex that couples electron transfer with translocation of ions across the membrane. The polypeptide is Ion-translocating oxidoreductase complex subunit A (Colwellia psychrerythraea (strain 34H / ATCC BAA-681) (Vibrio psychroerythus)).